The sequence spans 339 residues: Annexin A2 (339 aa).

Ser2 carries the N-acetylserine modification. The segment at 2-24 is S100A10-binding site; it reads STVHEILCKLSLEGDHSTPPSAY. Tyr24 carries the phosphotyrosine; by SRC modification. Ser26 is modified (phosphoserine; by PKC). 2 Annexin repeats span residues 33-104 and 105-176; these read FDAE…GLLK and TPAQ…ALAK. Lys49 carries the N6-acetyllysine; alternate modification. Lys49 is covalently cross-linked (Glycyl lysine isopeptide (Lys-Gly) (interchain with G-Cter in SUMO1); alternate). Residue Lys49 forms a Glycyl lysine isopeptide (Lys-Gly) (interchain with G-Cter in SUMO2); alternate linkage. At Lys152 the chain carries N6-acetyllysine. Ser184 is modified (phosphoserine). 2 Annexin repeats span residues 189–261 and 265–336; these read ELID…NLVQ and NKPL…YLCG. Tyr199 is subject to Phosphotyrosine. N6-acetyllysine is present on Lys227.

The protein belongs to the annexin family. As to quaternary structure, heterotetramer containing 2 light chains of S100A10/p11 and 2 heavy chains of ANXA2/p36. Interacts with ATP1B1. Interacts with DYSF. Interacts with COCH. Interacts (via repeat Annexin 1) with PCSK9 (via the C-terminal domain); the interaction inhibits the degradation of LDLR. Interacts with CEACAM1 (via the cytoplasmic domain); this interaction is regulated by phosphorylation of CEACAM1. Interacts with APPL2 and APPL1; targets APPL2 to endosomes and acting in parallel to RAB5A. Interacts with S100A4. May interact with UBAP2. Interacts with PLEKHG4B; this interaction is required for PLEKHG4B localization to cell-cell adhesions. (Microbial infection) Interacts with human cytomegalovirus (HCMV). In terms of assembly, (Microbial infection) Interacts with M.pneumoniae CARDS toxin; CARDS probably uses this protein as a receptor. A portion of internalized CARDS remains associated with intracellular annexin 2. Phosphorylation of Tyr-24 enhances heat stress-induced translocation to the cell surface. Post-translationally, ISGylated.

The protein resides in the secreted. Its subcellular location is the extracellular space. It localises to the extracellular matrix. It is found in the basement membrane. The protein localises to the melanosome. Calcium-regulated membrane-binding protein whose affinity for calcium is greatly enhanced by anionic phospholipids. It binds two calcium ions with high affinity. May be involved in heat-stress response. Inhibits PCSK9-enhanced LDLR degradation, probably reduces PCSK9 protein levels via a translational mechanism but also competes with LDLR for binding with PCSK9. Binds to endosomes damaged by phagocytosis of particulate wear debris and participates in endosomal membrane stabilization, thereby limiting NLRP3 inflammasome activation. Required for endothelial cell surface plasmin generation and may support fibrinolytic surveillance and neoangiogenesis. Its function is as follows. (Microbial infection) Binds M.pneumoniae CARDS toxin, probably serves as one receptor for this pathogen. When ANXA2 is down-regulated by siRNA, less toxin binds to human cells and less vacuolization (a symptom of M.pneumoniae infection) is seen. This is Annexin A2 (ANXA2) from Homo sapiens (Human).